A 347-amino-acid polypeptide reads, in one-letter code: Quinolinate synthase (347 aa).

Residues His47 and Ser68 each coordinate iminosuccinate. Cys113 is a binding site for [4Fe-4S] cluster. Residues 139–141 (YAN) and Ser156 contribute to the iminosuccinate site. [4Fe-4S] cluster is bound at residue Cys200. Iminosuccinate is bound by residues 226 to 228 (HPE) and Thr243. Residue Cys297 participates in [4Fe-4S] cluster binding.

Belongs to the quinolinate synthase family. Type 1 subfamily. It depends on [4Fe-4S] cluster as a cofactor.

It localises to the cytoplasm. It catalyses the reaction iminosuccinate + dihydroxyacetone phosphate = quinolinate + phosphate + 2 H2O + H(+). Its pathway is cofactor biosynthesis; NAD(+) biosynthesis; quinolinate from iminoaspartate: step 1/1. Catalyzes the condensation of iminoaspartate with dihydroxyacetone phosphate to form quinolinate. This chain is Quinolinate synthase, found in Escherichia coli O9:H4 (strain HS).